Reading from the N-terminus, the 263-residue chain is 5'-nucleotidase SurE (263 aa).

Residues D8, D9, S43, and N96 each contribute to the a divalent metal cation site.

It belongs to the SurE nucleotidase family. A divalent metal cation is required as a cofactor.

Its subcellular location is the cytoplasm. It carries out the reaction a ribonucleoside 5'-phosphate + H2O = a ribonucleoside + phosphate. In terms of biological role, nucleotidase that shows phosphatase activity on nucleoside 5'-monophosphates. This Jannaschia sp. (strain CCS1) protein is 5'-nucleotidase SurE.